Here is a 252-residue protein sequence, read N- to C-terminus: Ditrans,polycis-undecaprenyl-diphosphate synthase ((2E,6E)-farnesyl-diphosphate specific) (252 aa).

The active site involves Asp25. Mg(2+) is bound at residue Asp25. Substrate is bound by residues 26 to 29, Trp30, Arg38, His42, and 70 to 72; these read GNGR and SSE. The active-site Proton acceptor is Asn73. Residues Trp74, Arg76, and Arg193 each coordinate substrate. His198 contacts Mg(2+). Residue 199-201 participates in substrate binding; sequence RIS. Glu212 contacts Mg(2+).

It belongs to the UPP synthase family. In terms of assembly, homodimer. Mg(2+) serves as cofactor.

The catalysed reaction is 8 isopentenyl diphosphate + (2E,6E)-farnesyl diphosphate = di-trans,octa-cis-undecaprenyl diphosphate + 8 diphosphate. Functionally, catalyzes the sequential condensation of isopentenyl diphosphate (IPP) with (2E,6E)-farnesyl diphosphate (E,E-FPP) to yield (2Z,6Z,10Z,14Z,18Z,22Z,26Z,30Z,34E,38E)-undecaprenyl diphosphate (di-trans,octa-cis-UPP). UPP is the precursor of glycosyl carrier lipid in the biosynthesis of bacterial cell wall polysaccharide components such as peptidoglycan and lipopolysaccharide. The protein is Ditrans,polycis-undecaprenyl-diphosphate synthase ((2E,6E)-farnesyl-diphosphate specific) of Salmonella paratyphi A (strain ATCC 9150 / SARB42).